The chain runs to 639 residues: Chaperone protein DnaK (639 aa).

Residue threonine 197 is modified to Phosphothreonine; by autocatalysis. The disordered stretch occupies residues serine 600–lysine 639. A compositionally biased stretch (low complexity) spans asparagine 613 to glycine 624. Acidic residues predominate over residues asparagine 629–lysine 639.

This sequence belongs to the heat shock protein 70 family.

Its function is as follows. Acts as a chaperone. This chain is Chaperone protein DnaK, found in Bacteroides fragilis (strain ATCC 25285 / DSM 2151 / CCUG 4856 / JCM 11019 / LMG 10263 / NCTC 9343 / Onslow / VPI 2553 / EN-2).